Here is a 275-residue protein sequence, read N- to C-terminus: Expansin-B6 (275 aa).

The signal sequence occupies residues 1–25 (MAARMGSKVAAILAILSVLVVHGSC). Asn-33 carries an N-linked (GlcNAc...) asparagine glycan. In terms of domain architecture, Expansin-like EG45 spans 64–170 (GGACGFKNVN…RRVPCNYPGL (107 aa)). 3 disulfide bridges follow: Cys-67-Cys-95, Cys-98-Cys-165, and Cys-103-Cys-109. Residues 183-270 (VYFAVLVEYE…NWSPNSNYRS (88 aa)) form the Expansin-like CBD domain.

The protein belongs to the expansin family. Expansin B subfamily. As to expression, expressed in internodes.

It is found in the secreted. Its subcellular location is the cell wall. The protein resides in the membrane. Its function is as follows. May cause loosening and extension of plant cell walls by disrupting non-covalent bonding between cellulose microfibrils and matrix glucans. No enzymatic activity has been found. May be required for rapid internodal elongation in deepwater rice during submergence. In Oryza sativa subsp. japonica (Rice), this protein is Expansin-B6 (EXPB6).